Consider the following 574-residue polypeptide: Myo-inositol transporter FST1 (574 aa).

Residues 1 to 76 (MGKSRQNSTT…VQFANPKHFT (76 aa)) lie on the Cytoplasmic side of the membrane. The helical transmembrane segment at 77–97 (WLLVAFASMGGLLSGLDQSLI) threads the bilayer. Residues 98 to 115 (SGANLFLPDDLGLTEHEN) lie on the Extracellular side of the membrane. A helical transmembrane segment spans residues 116 to 136 (SLVNSGMPLGAVGGALLLSPA). At 137-143 (NEYFGRK) the chain is on the cytoplasmic side. A helical transmembrane segment spans residues 144 to 164 (GAIIISIILYTIGAALEAGSI). Over 165 to 173 (NFGMIVSSR) the chain is Extracellular. A helical transmembrane segment spans residues 174–194 (VILGLGVGLEGGTVPVYVAET). The Cytoplasmic portion of the chain corresponds to 195 to 205 (VERRIRGNLVS). The chain crosses the membrane as a helical span at residues 206–226 (LYQFNIALGEVLGYAVGAIFL). Over 227–233 (NVPGNWR) the chain is Extracellular. Residues 234-254 (YILGSSLLFSTIMFFGMLFLP) traverse the membrane as a helical segment. Over 255–330 (ESPRFLIHQK…RARRALVYAN (76 aa)) the chain is Cytoplasmic. A helical membrane pass occupies residues 331 to 351 (IMILLGQLTGVNAIMYYMSVL). Residues 352–363 (MNQIGFDKKESN) are Extracellular-facing. A helical membrane pass occupies residues 364-384 (YMSLVGGGSLLLGTIPAIFLM). Residues 385 to 390 (ERFGRR) are Cytoplasmic-facing. The chain crosses the membrane as a helical span at residues 391–411 (FWAITMLPGFFIGLVLIGVSY). The Extracellular portion of the chain corresponds to 412 to 426 (QFDVETQLQTVEGLY). The helical transmembrane segment at 427-447 (LSGLIIYMGFFGSYACLTWVV) threads the bilayer. The Cytoplasmic portion of the chain corresponds to 448-465 (PSEVYPTYLRSYGMTTSD). Residues 466–486 (ALLFLASFIVTYNFTAMQNAM) form a helical membrane-spanning segment. Residues 487 to 490 (GKTG) are Extracellular-facing. Residues 491–511 (LALGFYGGIAFIGEIYQIFFM) form a helical membrane-spanning segment. Topologically, residues 512-574 (PETKNKTLEE…PKDQVQVSHA (63 aa)) are cytoplasmic.

It belongs to the major facilitator superfamily. Sugar transporter (TC 2.A.1.1) family.

Its subcellular location is the cell membrane. It carries out the reaction myo-inositol(out) + H(+)(out) = myo-inositol(in) + H(+)(in). Its function is as follows. Transporter for myo-inositol. Also appears to transport the polyketide mycotoxin fumonisin B1 (FB1). Does not appear to transport hexose sugars. The polypeptide is Myo-inositol transporter FST1 (Gibberella moniliformis (strain M3125 / FGSC 7600) (Maize ear and stalk rot fungus)).